The chain runs to 153 residues: Small ribosomal subunit protein bS6 (153 aa).

A disordered region spans residues 94 to 153; sequence EAHEEGPSAMMQKRDRDDRPRRDGDRPDRGPREDRGPRPPREGGFGDREDRPRRPREDRA.

It belongs to the bacterial ribosomal protein bS6 family.

Binds together with bS18 to 16S ribosomal RNA. This Agrobacterium fabrum (strain C58 / ATCC 33970) (Agrobacterium tumefaciens (strain C58)) protein is Small ribosomal subunit protein bS6.